The primary structure comprises 197 residues: Glycerol-3-phosphate acyltransferase (197 aa).

The next 4 helical transmembrane spans lie at 1–21, 69–89, 110–130, and 152–172; these read MTAL…GLLV, LPML…AVVG, VMLF…LVVL, and VFFT…SFIF.

The protein belongs to the PlsY family. In terms of assembly, probably interacts with PlsX.

The protein localises to the cell membrane. The catalysed reaction is an acyl phosphate + sn-glycerol 3-phosphate = a 1-acyl-sn-glycero-3-phosphate + phosphate. It participates in lipid metabolism; phospholipid metabolism. Its function is as follows. Catalyzes the transfer of an acyl group from acyl-phosphate (acyl-PO(4)) to glycerol-3-phosphate (G3P) to form lysophosphatidic acid (LPA). This enzyme utilizes acyl-phosphate as fatty acyl donor, but not acyl-CoA or acyl-ACP. The polypeptide is Glycerol-3-phosphate acyltransferase (Geobacillus kaustophilus (strain HTA426)).